The chain runs to 862 residues: MKSSEVRQKFLEFFETHGHTIVPSSPLVPGNDPTLLFTNAGMVQFKDVFLGQDKRPYVRAASAQRCVRAGGKHNDLENVGYTARHHTFFEMLGNFSFGDYFKRNAIRFAWEFLTDILKIPRERLWITVYAEDDEAADIWLNEVGIDSSRFTRIATQDNFWQMGDTGPCGPCSEIFYDHGPEIPGGPPGTPNADGDRYVEIWNLVFMQYNRDSAGTLHPLPRPSVDTGMGLERISAVMQQVHSNYEIDLFQQLIKAAARATNTTDLSSSSLNVIADHIRACSFLIADGVIPGNEGRGYVLRRIIRRAIRHGYKLGQKQPFFHQLVEDLASVMGQAYPELMEAKTRVSAVLKQEEERFAETLENGMQVLEAALRRGDRMLDGETLFRLYDTFGFPLDLTADIARERGIAIDEAGFDQAMEQQRERARTTSKFIMQEAIAYSGPSTTFHGYESLRQEGQVLAIYKEGSRVEFIEAGDEAVIVLDKTPFYAESGGQVGDSGELLAANGTFAVADTQKIQADVFGHKGLLRSGRLATGDAVLAEVDRAARARTERNHSVTHLMHKALREVLGHHVQQKGSLVDANKTRFDFAHNQPVTDAEIRKVEMLVNAEILANAATEARMMAIEDAKKSGAMMLFGEKYSDEVRVLDIGTSRELCGGTHVKRTGDIGLFKIVAESGVAAGVRRVEAVTGERALTYIQEQELQLQRVAAAVKAQPQDAAARITQILDNVKHLERELGRMKSKLASSQGDDFADRVREIKGVKVLAVCLEEADPKTLREAVDKFKNKFKSCVTVLAAVEDGKVKLIAGVTSDLTARLKAGDLVNFVAQQVGGKGGGRADLAQAGGTVPDSLPAALESVASWVEQHL.

Residues His552, His556, Cys653, and His657 each coordinate Zn(2+).

It belongs to the class-II aminoacyl-tRNA synthetase family. It depends on Zn(2+) as a cofactor.

Its subcellular location is the cytoplasm. It catalyses the reaction tRNA(Ala) + L-alanine + ATP = L-alanyl-tRNA(Ala) + AMP + diphosphate. Functionally, catalyzes the attachment of alanine to tRNA(Ala) in a two-step reaction: alanine is first activated by ATP to form Ala-AMP and then transferred to the acceptor end of tRNA(Ala). Also edits incorrectly charged Ser-tRNA(Ala) and Gly-tRNA(Ala) via its editing domain. The sequence is that of Alanine--tRNA ligase from Nitrosospira multiformis (strain ATCC 25196 / NCIMB 11849 / C 71).